Consider the following 76-residue polypeptide: Putative snRNP Sm-like protein (76 aa).

Positions 4–76 (RPLDVIHKSL…VLAISPVEIE (73 aa)) constitute a Sm domain.

Belongs to the snRNP Sm proteins family.

The protein is Putative snRNP Sm-like protein of Thermococcus sibiricus (strain DSM 12597 / MM 739).